The primary structure comprises 444 residues: MGALIPSSTLFNIFDFNPKKVRIAFIAVGLRGQTHVENMARRDDVEIVAFADPDPYMVGRAQEILKKNGKKPAKVFGNGNDDYKNMLKDKNIDAVFVSSPWEWHHEHGVAAMKAGKIVGMEVSGAITLEECWDYVKVSEQTGVPLMALENVCYRRDVMAILNMVRKGMFGELVHGTGGYQHDLRPVLFNSGINGKNGDGVEFGEKAFSEAKWRTNHYKNRNGELYPTHGVGPLHTMMDINRGNRLLRLSSFASKARGLHKYIVDKGGESHPNAKVEWKQGDIVTTQIQCHNGETIVLTHDTSLQRPYNLGFKVQGTEGLWEDFGWGEAAQGFIYFEKIMNHSHRWDSSEKWIKEYDHPMWKKHEQKAVGAGHGGMDYFLDNTFVECIKRNEAFPLDVYDLATWYSITPLSEKSIAENGAVQEIPDFTNGKWKNAKNTFAINDDY.

Residues 30-31, aspartate 52, asparagine 80, 101-104, histidine 107, 121-122, and asparagine 150 each bind NAD(+); these read LR, WEWH, and EV. Substrate is bound at residue tyrosine 179. 208–212 is an NAD(+) binding site; sequence SEAKW. Substrate contacts are provided by residues arginine 213, 225–228, and tyrosine 307; that span reads YPTH. Position 225 (tyrosine 225) interacts with NAD(+).

Belongs to the Gfo/Idh/MocA family. Glycosyl hydrolase 109 subfamily. The cofactor is NAD(+).

The enzyme catalyses Cleavage of non-reducing alpha-(1-&gt;3)-N-acetylgalactosamine residues from human blood group A and AB mucin glycoproteins, Forssman hapten and blood group A lacto series glycolipids.. In terms of biological role, glycosidase that has specific alpha-N-acetylgalactosaminidase activity. The polypeptide is Alpha-N-acetylgalactosaminidase (nagA) (Elizabethkingia meningoseptica (Chryseobacterium meningosepticum)).